The primary structure comprises 443 residues: Probable glycine dehydrogenase (decarboxylating) subunit 1 (443 aa).

The protein belongs to the GcvP family. N-terminal subunit subfamily. The glycine cleavage system is composed of four proteins: P, T, L and H. In this organism, the P 'protein' is a heterodimer of two subunits.

The enzyme catalyses N(6)-[(R)-lipoyl]-L-lysyl-[glycine-cleavage complex H protein] + glycine + H(+) = N(6)-[(R)-S(8)-aminomethyldihydrolipoyl]-L-lysyl-[glycine-cleavage complex H protein] + CO2. Its function is as follows. The glycine cleavage system catalyzes the degradation of glycine. The P protein binds the alpha-amino group of glycine through its pyridoxal phosphate cofactor; CO(2) is released and the remaining methylamine moiety is then transferred to the lipoamide cofactor of the H protein. In Endomicrobium trichonymphae, this protein is Probable glycine dehydrogenase (decarboxylating) subunit 1.